A 169-amino-acid chain; its full sequence is CKLF-like MARVEL transmembrane domain-containing protein 2A (169 aa).

The next 4 helical transmembrane spans lie at 40 to 60 (FWLSGHAVFKLLSLGCMISAL), 69 to 89 (HPVLILLICMEAAICIFFIFL), 98 to 118 (IPFVFWPMADIFNSLFSCVFL), and 136 to 156 (YLTAMILMGAAAICSFIDMLL). The MARVEL domain occupies 40-162 (FWLSGHAVFK…DMLLQFQHFR (123 aa)).

Belongs to the chemokine-like factor family.

It localises to the membrane. This is CKLF-like MARVEL transmembrane domain-containing protein 2A (Cmtm2a) from Mus musculus (Mouse).